The chain runs to 258 residues: Tetraspanin-18B (258 aa).

The Cytoplasmic segment spans residues 1–25 (MGLGEASARGTSMEGDCLSCIKYLM). Residues 26–46 (FVFNFLIFLGGSFLLGVGVWV) form a helical membrane-spanning segment. Residues 47-61 (VVDPTGFREIVAANP) lie on the Extracellular side of the membrane. Residues 62 to 82 (LLFTGVYIILAMGGMLFLLGF) form a helical membrane-spanning segment. The Cytoplasmic segment spans residues 83 to 94 (LGCCGAIRENKC). The helical transmembrane segment at 95-115 (LLLFFFMLILIIFLAELAAAI) threads the bilayer. Topologically, residues 116 to 228 (LAFIFREHLT…SAVVDYFEMY (113 aa)) are extracellular. N-linked (GlcNAc...) asparagine glycosylation is present at asparagine 141. A helical membrane pass occupies residues 229 to 249 (IYVAGALAIVVLTIELFAMVF). Topologically, residues 250–258 (AMCLFRGIQ) are cytoplasmic.

The protein belongs to the tetraspanin (TM4SF) family.

It localises to the membrane. Functionally, may regulate angiogenesis through KDR/VEGFR2 and NOTCH1 pathways. The chain is Tetraspanin-18B (tspan18b) from Danio rerio (Zebrafish).